Reading from the N-terminus, the 687-residue chain is Homeobox-leucine zipper protein HDG12 (687 aa).

Residues Met-1–Gln-32 form a disordered region. Over residues Gln-8–Lys-17 the composition is skewed to basic and acidic residues. A compositionally biased stretch (basic residues) spans Lys-18 to Pro-30. Positions Lys-21–His-80 form a DNA-binding region, homeobox. Residues Ala-87 to Lys-150 adopt a coiled-coil conformation. Residues Ser-206–Asn-440 enclose the START domain.

This sequence belongs to the HD-ZIP homeobox family. Class IV subfamily. As to quaternary structure, interacts with BBM. Expressed in apical meristems and young epidermal tissue including trichomes and stipules. Expressed in lateral root tips, the L1 layer of apical inflorescence meristems and early flower primordia, carpel and stamen filament epidermis, stigma papillae, ovule primordia, nucellus and embryo.

The protein localises to the nucleus. In terms of biological role, probable transcription factor that acts as a negative regulator of trichome branching in association with HDG11. Seems to promote cell differentiation. May regulate cell differentiation and proliferation during root and shoot meristem development. Acts as a positive regulator of SCL18/LAS expression. Involved, together with PDF2, in the regulation of flower organs development by promoting the expression of APETALA 3 (AP3) in the epidermis and internal cell layers of developing flowers. In Arabidopsis thaliana (Mouse-ear cress), this protein is Homeobox-leucine zipper protein HDG12.